The following is a 335-amino-acid chain: Glycerol-3-phosphate dehydrogenase [NAD(P)+] (335 aa).

Positions 15, 16, 36, and 110 each coordinate NADPH. Residues Lys110, Gly139, and Thr141 each contribute to the sn-glycerol 3-phosphate site. Ala143 is a binding site for NADPH. Residues Lys195, Asp248, Ser258, Arg259, and Asn260 each contribute to the sn-glycerol 3-phosphate site. The active-site Proton acceptor is the Lys195. Residue Arg259 coordinates NADPH. Positions 283 and 285 each coordinate NADPH.

Belongs to the NAD-dependent glycerol-3-phosphate dehydrogenase family.

The protein localises to the cytoplasm. It catalyses the reaction sn-glycerol 3-phosphate + NAD(+) = dihydroxyacetone phosphate + NADH + H(+). The enzyme catalyses sn-glycerol 3-phosphate + NADP(+) = dihydroxyacetone phosphate + NADPH + H(+). The protein operates within membrane lipid metabolism; glycerophospholipid metabolism. Catalyzes the reduction of the glycolytic intermediate dihydroxyacetone phosphate (DHAP) to sn-glycerol 3-phosphate (G3P), the key precursor for phospholipid synthesis. In Haemophilus influenzae (strain 86-028NP), this protein is Glycerol-3-phosphate dehydrogenase [NAD(P)+].